A 491-amino-acid polypeptide reads, in one-letter code: Phosphoethanolamine N-methyltransferase 1 (491 aa).

At A2 the chain carries N-acetylalanine. The S-adenosyl-L-homocysteine site is built by G61, R66, D82, D107, V108, and N126. Residues S159, S164, G165, R169, and Y176 each coordinate phosphocholine. Residues Q245–Y246 and Y254 contribute to the N-methylethanolamine phosphate site. Y254 provides a ligand contact to phosphocholine. The S-adenosyl-L-homocysteine site is built by V263, S264, G290, D312, D338, C339, and R355. Phosphocholine-binding residues include Y386, Y400, R404, Y406, and K472. Residues Y386, Y400, R404–Y406, and K472 contribute to the N-methylethanolamine phosphate site.

Belongs to the class I-like SAM-binding methyltransferase superfamily. PEAMT family. Highly expressed in the meristem and elongation zones of the root. Expressed in differentiated root epidermal cells. Highly expressed in leaf vasculature.

It localises to the cytoplasm. The catalysed reaction is phosphoethanolamine + S-adenosyl-L-methionine = N-methylethanolamine phosphate + S-adenosyl-L-homocysteine + H(+). It catalyses the reaction N-methylethanolamine phosphate + S-adenosyl-L-methionine = N,N-dimethylethanolamine phosphate + S-adenosyl-L-homocysteine + H(+). It carries out the reaction N,N-dimethylethanolamine phosphate + S-adenosyl-L-methionine = phosphocholine + S-adenosyl-L-homocysteine + H(+). The protein operates within phospholipid metabolism; phosphatidylcholine biosynthesis; phosphocholine from phosphoethanolamine: step 1/1. Functionally, involved in phosphocholine biosynthesis. Catalyzes the N-methylation of phosphoethanolamine, phosphomonomethylethanolamine and phosphodimethylethanolamine, the three methylation steps required to convert phosphoethanolamine to phosphocholine (PC). Required for root system development and epidermal cell integrity through its role in choline and phospholipid metabolism. In association with NMT3, regulates PC homeostasis, phase transition at the shoot apex, coordinated organ development, and fertility. In association with NMT3, involved in phosphatidylcholine biosynthesis and vascular development. In association with NMT2, involved in the production of phosphatidylcholine in roots, essential for root development. In association with NMT2 produce phosphocholine mainly for leaf growth maintenance. Contributes to the regulation of overall root zonation dynamics through reactive oxygen species (ROS) and auxin-regulated cell differentiation. Participates in root development of primary root elongation under salt stress conditions by balancing reactive oxygen species (ROS) production and distribution through abscisic acid (ABA) signaling. The polypeptide is Phosphoethanolamine N-methyltransferase 1 (Arabidopsis thaliana (Mouse-ear cress)).